The chain runs to 466 residues: Arginine biosynthesis bifunctional protein ArgJ, mitochondrial (466 aa).

Residues 1 to 9 (MSSLVLKRF) constitute a mitochondrion transit peptide. Substrate is bound by residues Thr183, Lys209, Thr232, Glu320, Asn461, and Ser466. Residue Thr232 is the Nucleophile of the active site.

This sequence belongs to the ArgJ family. Heterodimer of an alpha and a beta chain. Post-translationally, the alpha and beta chains are autoproteolytically processed from a single precursor protein within the mitochondrion.

Its subcellular location is the mitochondrion matrix. The enzyme catalyses N(2)-acetyl-L-ornithine + L-glutamate = N-acetyl-L-glutamate + L-ornithine. It catalyses the reaction L-glutamate + acetyl-CoA = N-acetyl-L-glutamate + CoA + H(+). It participates in amino-acid biosynthesis; L-arginine biosynthesis; L-ornithine and N-acetyl-L-glutamate from L-glutamate and N(2)-acetyl-L-ornithine (cyclic): step 1/1. It functions in the pathway amino-acid biosynthesis; L-arginine biosynthesis; N(2)-acetyl-L-ornithine from L-glutamate: step 1/4. In terms of biological role, catalyzes two activities which are involved in the cyclic version of arginine biosynthesis: the synthesis of acetylglutamate from glutamate and acetyl-CoA, and of ornithine by transacetylation between acetylornithine and glutamate. In Laccaria bicolor (strain S238N-H82 / ATCC MYA-4686) (Bicoloured deceiver), this protein is Arginine biosynthesis bifunctional protein ArgJ, mitochondrial.